A 399-amino-acid polypeptide reads, in one-letter code: Acetate kinase (399 aa).

N8 is a binding site for Mg(2+). An ATP-binding site is contributed by K15. Residue R89 coordinates substrate. The Proton donor/acceptor role is filled by D146. ATP-binding positions include 206–210 (HVGNG), 283–285 (DMR), and 331–335 (GMGEN). Mg(2+) is bound at residue E383.

The protein belongs to the acetokinase family. In terms of assembly, homodimer. Mg(2+) serves as cofactor. Requires Mn(2+) as cofactor.

It is found in the cytoplasm. It carries out the reaction acetate + ATP = acetyl phosphate + ADP. Its pathway is metabolic intermediate biosynthesis; acetyl-CoA biosynthesis; acetyl-CoA from acetate: step 1/2. Functionally, catalyzes the formation of acetyl phosphate from acetate and ATP. Can also catalyze the reverse reaction. The sequence is that of Acetate kinase from Streptococcus equi subsp. equi (strain 4047).